Here is a 331-residue protein sequence, read N- to C-terminus: MKVTVLVGGVGGARFLLGVQHLLGLGQFARDDARGPDAHELTAVVNVGDDTWMFGVRICPDLDTCMYTLGGGIDPDRGWGHRDETWHAKEELAAYGVQPDWFGLGDRDLATHLVRSQMLRAGYPLSQVTEALCDRWNPGARLLPASDDRSETHVVITDPDTDERRAIHFQEWWVRYRAKVPTHSFAFVGADKATTAPGVTDAIADADVVLLAPSNPVVSIGSILAIPGIRGALRSTSAKIIGYSPIIAGKPLRGMADECLSVIGVASTSEAVGRHYGARSGTGILDGWLVHEGDSAQIDGVQVEAVPLLMTDPATTAEMVRAGVRLAGVTL.

Asp-63 contributes to the 7,8-didemethyl-8-hydroxy-5-deazariboflavin binding site.

It belongs to the CofD family. In terms of assembly, homodimer. Requires Mg(2+) as cofactor.

The enzyme catalyses enolpyruvoyl-2-diphospho-5'-guanosine + 7,8-didemethyl-8-hydroxy-5-deazariboflavin = dehydro coenzyme F420-0 + GMP + H(+). The protein operates within cofactor biosynthesis; coenzyme F420 biosynthesis. Functionally, catalyzes the transfer of the phosphoenolpyruvate moiety from enoylpyruvoyl-2-diphospho-5'-guanosine (EPPG) to 7,8-didemethyl-8-hydroxy-5-deazariboflavin (FO) with the formation of dehydro coenzyme F420-0 and GMP. The polypeptide is Phosphoenolpyruvate transferase (Mycobacterium sp. (strain KMS)).